A 124-amino-acid chain; its full sequence is Small ribosomal subunit protein uS13 (124 aa).

Positions Lys94 to Arg124 are disordered.

Belongs to the universal ribosomal protein uS13 family. Part of the 30S ribosomal subunit. Forms a loose heterodimer with protein S19. Forms two bridges to the 50S subunit in the 70S ribosome.

Located at the top of the head of the 30S subunit, it contacts several helices of the 16S rRNA. In the 70S ribosome it contacts the 23S rRNA (bridge B1a) and protein L5 of the 50S subunit (bridge B1b), connecting the 2 subunits; these bridges are implicated in subunit movement. Contacts the tRNAs in the A and P-sites. The sequence is that of Small ribosomal subunit protein uS13 from Pseudarthrobacter chlorophenolicus (strain ATCC 700700 / DSM 12829 / CIP 107037 / JCM 12360 / KCTC 9906 / NCIMB 13794 / A6) (Arthrobacter chlorophenolicus).